The sequence spans 215 residues: Ribosomal RNA small subunit methyltransferase G (215 aa).

S-adenosyl-L-methionine contacts are provided by residues G77, F82, 130 to 131, and R146; that span reads IE.

Belongs to the methyltransferase superfamily. RNA methyltransferase RsmG family.

It localises to the cytoplasm. It carries out the reaction guanosine(527) in 16S rRNA + S-adenosyl-L-methionine = N(7)-methylguanosine(527) in 16S rRNA + S-adenosyl-L-homocysteine. In terms of biological role, specifically methylates the N7 position of guanine in position 527 of 16S rRNA. The protein is Ribosomal RNA small subunit methyltransferase G of Bartonella bacilliformis (strain ATCC 35685 / KC583 / Herrer 020/F12,63).